The chain runs to 349 residues: Protein RecA (349 aa).

An ATP-binding site is contributed by 65 to 72 (GPESSGKT).

Belongs to the RecA family.

It localises to the cytoplasm. Functionally, can catalyze the hydrolysis of ATP in the presence of single-stranded DNA, the ATP-dependent uptake of single-stranded DNA by duplex DNA, and the ATP-dependent hybridization of homologous single-stranded DNAs. It interacts with LexA causing its activation and leading to its autocatalytic cleavage. In Azotobacter vinelandii (strain DJ / ATCC BAA-1303), this protein is Protein RecA.